A 209-amino-acid polypeptide reads, in one-letter code: Floral homeotic protein GLOBOSA (209 aa).

An MADS-box domain is found at 3–57 (RGKIEIKRIENSSNRQVTYSKRRNGILKKAKEISVLCDARVSVIIFASSGKMHEF). In terms of domain architecture, K-box spans 82–173 (HENLDNEINK…QLEIASMNRN (92 aa)).

Expressed mainly in floral organs and, within the flower, expression is restricted to petals and stamens.

The protein resides in the nucleus. Transcription factor involved in the genetic control of flower development. Acts in conjunction with DEFICIENS (defA). The polypeptide is Floral homeotic protein GLOBOSA (GLO) (Nicotiana tabacum (Common tobacco)).